We begin with the raw amino-acid sequence, 1376 residues long: DNA-directed RNA polymerase subunit beta (1376 aa).

Residues 1357-1368 (NSKTGRQTNPGT) show a composition bias toward polar residues. The segment at 1357–1376 (NSKTGRQTNPGTRENLPAAE) is disordered.

Belongs to the RNA polymerase beta chain family. In terms of assembly, the RNAP catalytic core consists of 2 alpha, 1 beta, 1 beta' and 1 omega subunit. When a sigma factor is associated with the core the holoenzyme is formed, which can initiate transcription.

The catalysed reaction is RNA(n) + a ribonucleoside 5'-triphosphate = RNA(n+1) + diphosphate. DNA-dependent RNA polymerase catalyzes the transcription of DNA into RNA using the four ribonucleoside triphosphates as substrates. In Azorhizobium caulinodans (strain ATCC 43989 / DSM 5975 / JCM 20966 / LMG 6465 / NBRC 14845 / NCIMB 13405 / ORS 571), this protein is DNA-directed RNA polymerase subunit beta.